The chain runs to 457 residues: ATP-dependent RNA helicase DbpA (457 aa).

Positions 3 to 31 match the Q motif motif; the sequence is AFSTLNVLPPAQLTNLNELGYLTMTPVQA. A Helicase ATP-binding domain is found at 34–205; the sequence is LPAILAGKDV…GRVQRDPLAI (172 aa). 47–54 lines the ATP pocket; that stretch reads AKTGSGKT. A DEAD box motif is present at residues 153-156; sequence DEAD. One can recognise a Helicase C-terminal domain in the interval 230-376; sequence PLLQRLLSLH…QTPPANSSIA (147 aa). The interval 383–457 is involved in 23S rRNA binding; sequence ATLCIDGGKK…GKTCRVRLLK (75 aa).

This sequence belongs to the DEAD box helicase family. DbpA subfamily. In terms of assembly, monomer.

It is found in the cytoplasm. It catalyses the reaction ATP + H2O = ADP + phosphate + H(+). With respect to regulation, requires hairpin 92 of 23S rRNA for optimal activity. ATPase activity is stimulated by interaction of the N-terminal domain with RNA. DEAD-box RNA helicase involved in the assembly of the 50S ribosomal subunit. Has an RNA-dependent ATPase activity, which is specific for 23S rRNA, and a 3' to 5' RNA helicase activity that uses the energy of ATP hydrolysis to destabilize and unwind short rRNA duplexes. Requires a single-stranded RNA loading site on the 3' side of the substrate helix. The polypeptide is ATP-dependent RNA helicase DbpA (Escherichia coli (strain K12)).